Reading from the N-terminus, the 220-residue chain is Cytidylate kinase (220 aa).

Residue 9–17 (GPAASGKST) coordinates ATP.

The protein belongs to the cytidylate kinase family. Type 1 subfamily.

It is found in the cytoplasm. The enzyme catalyses CMP + ATP = CDP + ADP. The catalysed reaction is dCMP + ATP = dCDP + ADP. This chain is Cytidylate kinase, found in Thermotoga neapolitana (strain ATCC 49049 / DSM 4359 / NBRC 107923 / NS-E).